The chain runs to 209 residues: Mitochondrial import inner membrane translocase subunit Tim23 (209 aa).

The next 3 helical transmembrane spans lie at 73 to 93, 125 to 145, and 172 to 194; these read FELAFFTIGGCCMTVAAFGAM, ALWANTLGSLALLYSAFGVII, and GGLRGIARGGLTGLTLTSLYALY.

The protein belongs to the Tim17/Tim22/Tim23 family. In terms of assembly, component of the TIM23 complex at least composed of TIMM23, TIMM17 (TIMM17A or TIMM17B) and TIMM50; within this complex, directly interacts with TIMM50. The complex interacts with the TIMM44 component of the PAM complex and with DNAJC15. Upon mitochondrial depolarization, interacts with PINK1; the interaction is required for PINK1 accumulation at the outer mitochondrial membrane, kinase activation by autophosphorylation and PRKN recruitement to mitochondria.

The protein localises to the mitochondrion inner membrane. Essential component of the TIM23 complex, a complex that mediates the translocation of transit peptide-containing proteins across the mitochondrial inner membrane. Has a role in the activation of stress-induced mitophagy by protecting PINK1 from OMA1-mediated degradation and facilitating its accumulation at the outer mitochondrial membrane in response to depolarization. In Pongo abelii (Sumatran orangutan), this protein is Mitochondrial import inner membrane translocase subunit Tim23 (TIMM23).